The primary structure comprises 460 residues: Photosystem II CP43 reaction center protein (460 aa).

The Cytoplasmic portion of the chain corresponds to 1-35 (MVTLSNTSMVGGRDLPSTGFAWWSGNARLINLSGK). The helical transmembrane segment at 36–58 (LLGAHVAHAGLIVFWAGAMTLFE) threads the bilayer. Residues 59–98 (VAHFIPEKPMYEQGLILLPHIATLGWGVGPAGEVTDIFPF) are Lumenal, thylakoid-facing. A helical transmembrane segment spans residues 99 to 121 (FVVGVLHLISSAVLGLGGIYHAL). The Cytoplasmic segment spans residues 122 to 142 (RGPEVLEEYSSFFGYDWKDKN). The helical transmembrane segment at 143-165 (QMTNIIGYHLILLGCGALLLVFK) threads the bilayer. Residues 166-220 (AMFFGGVYDTWAPGGGDVRVITNPTLNPAIIFGYLLKAPFGGEGWIISVNNMEDI) lie on the Lumenal, thylakoid side of the membrane. The helical transmembrane segment at 221–240 (IGGHIWIGLICISGGIWHIL) threads the bilayer. The Cytoplasmic portion of the chain corresponds to 241 to 255 (TKPFGWARRALIWSG). The helical transmembrane segment at 256-276 (EAYLSYSLGALSLMGFIASVF) threads the bilayer. Residues 277 to 411 (VWFNNTAYPS…NSFNYVSPRA (135 aa)) lie on the Lumenal, thylakoid side of the membrane. [CaMn4O5] cluster-binding residues include glutamate 341 and arginine 344. The chain crosses the membrane as a helical span at residues 412-436 (WLATSHFVLGFFFLVGHLWHAGRAR). The Cytoplasmic portion of the chain corresponds to 437 to 460 (AAAAGFEKGIDRETEPTLFMPDLD).

This sequence belongs to the PsbB/PsbC family. PsbC subfamily. PSII is composed of 1 copy each of membrane proteins PsbA, PsbB, PsbC, PsbD, PsbE, PsbF, PsbH, PsbI, PsbJ, PsbK, PsbL, PsbM, PsbT, PsbX, PsbY, PsbZ, Psb30/Ycf12, peripheral proteins PsbO, CyanoQ (PsbQ), PsbU, PsbV and a large number of cofactors. It forms dimeric complexes. The cofactor is Binds multiple chlorophylls and provides some of the ligands for the Ca-4Mn-5O cluster of the oxygen-evolving complex. It may also provide a ligand for a Cl- that is required for oxygen evolution. PSII binds additional chlorophylls, carotenoids and specific lipids..

The protein resides in the cellular thylakoid membrane. In terms of biological role, one of the components of the core complex of photosystem II (PSII). PSII binds chlorophyll and helps catalyze the primary light-induced photochemical processes of PSII. PSII is a light-driven water:plastoquinone oxidoreductase, using light energy to abstract electrons from H(2)O, generating O(2) and a proton gradient subsequently used for ATP formation. Required for correct assembly of PSII. The polypeptide is Photosystem II CP43 reaction center protein (Synechocystis sp. (strain ATCC 27184 / PCC 6803 / Kazusa)).